We begin with the raw amino-acid sequence, 334 residues long: Aspartate carbamoyltransferase catalytic subunit (334 aa).

Arginine 71 and threonine 72 together coordinate carbamoyl phosphate. Lysine 99 contacts L-aspartate. The carbamoyl phosphate site is built by arginine 121, histidine 151, and glutamine 154. 2 residues coordinate L-aspartate: arginine 184 and arginine 239. Residues glycine 280 and proline 281 each coordinate carbamoyl phosphate.

The protein belongs to the aspartate/ornithine carbamoyltransferase superfamily. ATCase family. As to quaternary structure, heterododecamer (2C3:3R2) of six catalytic PyrB chains organized as two trimers (C3), and six regulatory PyrI chains organized as three dimers (R2).

It catalyses the reaction carbamoyl phosphate + L-aspartate = N-carbamoyl-L-aspartate + phosphate + H(+). It functions in the pathway pyrimidine metabolism; UMP biosynthesis via de novo pathway; (S)-dihydroorotate from bicarbonate: step 2/3. Catalyzes the condensation of carbamoyl phosphate and aspartate to form carbamoyl aspartate and inorganic phosphate, the committed step in the de novo pyrimidine nucleotide biosynthesis pathway. In Pseudomonas savastanoi pv. phaseolicola (strain 1448A / Race 6) (Pseudomonas syringae pv. phaseolicola (strain 1448A / Race 6)), this protein is Aspartate carbamoyltransferase catalytic subunit.